A 103-amino-acid polypeptide reads, in one-letter code: Urease subunit beta (103 aa).

Belongs to the urease beta subunit family. Heterotrimer of UreA (gamma), UreB (beta) and UreC (alpha) subunits. Three heterotrimers associate to form the active enzyme.

It localises to the cytoplasm. It carries out the reaction urea + 2 H2O + H(+) = hydrogencarbonate + 2 NH4(+). It functions in the pathway nitrogen metabolism; urea degradation; CO(2) and NH(3) from urea (urease route): step 1/1. This chain is Urease subunit beta, found in Mycobacterium marinum (strain ATCC BAA-535 / M).